The following is a 187-amino-acid chain: Hypoxanthine/guanine phosphoribosyltransferase (187 aa).

The protein belongs to the purine/pyrimidine phosphoribosyltransferase family. Archaeal HPRT subfamily. Homodimer.

The protein resides in the cytoplasm. It catalyses the reaction IMP + diphosphate = hypoxanthine + 5-phospho-alpha-D-ribose 1-diphosphate. The catalysed reaction is GMP + diphosphate = guanine + 5-phospho-alpha-D-ribose 1-diphosphate. Its pathway is purine metabolism; IMP biosynthesis via salvage pathway; IMP from hypoxanthine: step 1/1. Catalyzes a salvage reaction resulting in the formation of IMP that is energically less costly than de novo synthesis. The sequence is that of Hypoxanthine/guanine phosphoribosyltransferase from Methanopyrus kandleri (strain AV19 / DSM 6324 / JCM 9639 / NBRC 100938).